The following is a 402-amino-acid chain: Secreted RxLR effector protein 73 (402 aa).

A signal peptide spans 1 to 23; that stretch reads MRLLHVVVATVSLTGAITSLIAA. N27 carries an N-linked (GlcNAc...) asparagine glycan. The RxLR signature appears at 104–107; that stretch reads RVLR. Residues N111, N134, N143, N165, and N286 are each glycosylated (N-linked (GlcNAc...) asparagine).

This sequence belongs to the RxLR effector family.

The protein localises to the secreted. Its subcellular location is the host cell. In terms of biological role, secreted effector that completely suppresses the host cell death induced by cell death-inducing proteins. In Plasmopara viticola (Downy mildew of grapevine), this protein is Secreted RxLR effector protein 73.